A 126-amino-acid polypeptide reads, in one-letter code: Fluoride-specific ion channel FluC (126 aa).

The next 4 helical transmembrane spans lie at methionine 3–valine 23, threonine 39–tryptophan 59, valine 71–valine 91, and alanine 101–isoleucine 121. Na(+) contacts are provided by glycine 75 and threonine 78.

This sequence belongs to the fluoride channel Fluc/FEX (TC 1.A.43) family.

The protein localises to the cell inner membrane. The enzyme catalyses fluoride(in) = fluoride(out). Na(+) is not transported, but it plays an essential structural role and its presence is essential for fluoride channel function. Its function is as follows. Fluoride-specific ion channel. Important for reducing fluoride concentration in the cell, thus reducing its toxicity. This Rhodospirillum centenum (strain ATCC 51521 / SW) protein is Fluoride-specific ion channel FluC.